A 257-amino-acid polypeptide reads, in one-letter code: Imidazole glycerol phosphate synthase subunit HisF (257 aa).

Active-site residues include D12 and D131.

Belongs to the HisA/HisF family. In terms of assembly, heterodimer of HisH and HisF.

Its subcellular location is the cytoplasm. The enzyme catalyses 5-[(5-phospho-1-deoxy-D-ribulos-1-ylimino)methylamino]-1-(5-phospho-beta-D-ribosyl)imidazole-4-carboxamide + L-glutamine = D-erythro-1-(imidazol-4-yl)glycerol 3-phosphate + 5-amino-1-(5-phospho-beta-D-ribosyl)imidazole-4-carboxamide + L-glutamate + H(+). Its pathway is amino-acid biosynthesis; L-histidine biosynthesis; L-histidine from 5-phospho-alpha-D-ribose 1-diphosphate: step 5/9. IGPS catalyzes the conversion of PRFAR and glutamine to IGP, AICAR and glutamate. The HisF subunit catalyzes the cyclization activity that produces IGP and AICAR from PRFAR using the ammonia provided by the HisH subunit. This chain is Imidazole glycerol phosphate synthase subunit HisF, found in Paraburkholderia xenovorans (strain LB400).